A 513-amino-acid polypeptide reads, in one-letter code: Maturase K (513 aa).

Belongs to the intron maturase 2 family. MatK subfamily.

It localises to the plastid. It is found in the chloroplast. Its function is as follows. Usually encoded in the trnK tRNA gene intron. Probably assists in splicing its own and other chloroplast group II introns. This chain is Maturase K, found in Eleusine indica (Goosegrass).